We begin with the raw amino-acid sequence, 128 residues long: NADH dehydrogenase [ubiquinone] 1 beta subcomplex subunit 6 (128 aa).

N-acetylthreonine is present on Thr-2. Lys-24 carries the N6-acetyllysine modification. A helical transmembrane segment spans residues 68–86 (SIFVFTHVLVPVWIIHYYM).

Belongs to the complex I NDUFB6 subunit family. Complex I is composed of 45 different subunits.

The protein localises to the mitochondrion inner membrane. Accessory subunit of the mitochondrial membrane respiratory chain NADH dehydrogenase (Complex I), that is believed not to be involved in catalysis. Complex I functions in the transfer of electrons from NADH to the respiratory chain. The immediate electron acceptor for the enzyme is believed to be ubiquinone. The protein is NADH dehydrogenase [ubiquinone] 1 beta subcomplex subunit 6 (NDUFB6) of Pan troglodytes (Chimpanzee).